The chain runs to 530 residues: MDNALIADENLKKPSKPAYYGTAGYRSKTSDLNNILCRASLIAYLRSTTFAGKIIGVMITASHNPVEYNGIKIIDHNGDMLDEVWEEYSDRIVNCDDEKLAREMKKILRSCSNQSELGEGVRGHVVLGRDTRDSGERLCNNIRSVLGKLNCTVDDYGVVTTPELHFLVRKCNTENRVVDKAEYMKNIAHNFNSLSSITKGNLRMMIDTANGVADMKLKELDGMLDGKLNYEVLNDPKGILNLDCGADFVKTKKRAPRLEALSSSGFSQAANRICASFDGDVDRLIFFTGPKDTEIFDGDSQAVFLALYIRSLLDRIESRLSIGVVLSYYSNNAAVDVLPPESFKVVMAQTGVKNFVSAAREFDVGIYFEPNGHGSVCFSQACIDEIEKGSTKSHAILKILANLFDPCIGDALANFVIFKALMGSADDLRKFRENPSRLLTVKIVDKNSIKVDQKNQVIEPKELQDKIDVEALSLGGRSFVRPSGTEDVVRVYAECPSEADADLLCLKVAQHVYDMCNGIGDHPEIDYTSK.

Ser-62 serves as the catalytic Phosphoserine intermediate. The Mg(2+) site is built by Ser-62, Asp-278, Asp-280, and Asp-282. Substrate contacts are provided by residues 369 to 371, 481 to 485, and Arg-490; these read EPN and RPSGT.

This sequence belongs to the phosphohexose mutase family. Requires Mg(2+) as cofactor.

The catalysed reaction is N-acetyl-alpha-D-glucosamine 1-phosphate = N-acetyl-D-glucosamine 6-phosphate. It participates in nucleotide-sugar biosynthesis; UDP-N-acetyl-alpha-D-glucosamine biosynthesis; N-acetyl-alpha-D-glucosamine 1-phosphate from alpha-D-glucosamine 6-phosphate (route I): step 2/2. Its function is as follows. Catalyzes the conversion of GlcNAc-6-P into GlcNAc-1-P during the synthesis of uridine diphosphate/UDP-GlcNAc, which is a biosynthetic precursor of chitin and also supplies the amino sugars for N-linked oligosaccharides of glycoproteins. The protein is Probable phosphoacetylglucosamine mutase of Encephalitozoon cuniculi (strain GB-M1) (Microsporidian parasite).